The chain runs to 416 residues: Serine hydroxymethyltransferase (416 aa).

(6S)-5,6,7,8-tetrahydrofolate is bound by residues leucine 118 and 122–124 (GHL). An N6-(pyridoxal phosphate)lysine modification is found at lysine 226. Residues glutamate 242 and 350–352 (SPF) each bind (6S)-5,6,7,8-tetrahydrofolate.

It belongs to the SHMT family. Homodimer. Pyridoxal 5'-phosphate is required as a cofactor.

It localises to the cytoplasm. The enzyme catalyses (6R)-5,10-methylene-5,6,7,8-tetrahydrofolate + glycine + H2O = (6S)-5,6,7,8-tetrahydrofolate + L-serine. The protein operates within one-carbon metabolism; tetrahydrofolate interconversion. Its pathway is amino-acid biosynthesis; glycine biosynthesis; glycine from L-serine: step 1/1. Its function is as follows. Catalyzes the reversible interconversion of serine and glycine with tetrahydrofolate (THF) serving as the one-carbon carrier. This reaction serves as the major source of one-carbon groups required for the biosynthesis of purines, thymidylate, methionine, and other important biomolecules. Also exhibits THF-independent aldolase activity toward beta-hydroxyamino acids, producing glycine and aldehydes, via a retro-aldol mechanism. This chain is Serine hydroxymethyltransferase, found in Helicobacter pylori (strain Shi470).